Reading from the N-terminus, the 81-residue chain is Short neurotoxin 2 (81 aa).

A signal peptide spans 1–21 (MKTLLLTLVVVTIVCLDLGYT). Disulfide bonds link cysteine 24/cysteine 43, cysteine 38/cysteine 60, cysteine 62/cysteine 73, and cysteine 74/cysteine 79.

Belongs to the three-finger toxin family. Short-chain subfamily. Type I alpha-neurotoxin sub-subfamily. As to expression, expressed by the venom gland.

The protein resides in the secreted. Its function is as follows. Binds to muscle nicotinic acetylcholine receptor (nAChR) and inhibit acetylcholine from binding to the receptor, thereby impairing neuromuscular transmission. This chain is Short neurotoxin 2, found in Hydrophis peronii (Spiny-headed seasnake).